A 325-amino-acid polypeptide reads, in one-letter code: Olfactory receptor 6Y1 (325 aa).

Residues 1–30 (MTTIILEVDNHTVTTRFILLGFPTRPAFQL) are Extracellular-facing. A glycan (N-linked (GlcNAc...) asparagine) is linked at N10. A helical transmembrane segment spans residues 31 to 51 (LFFSIFLATYLLTLLENLLII). Residues 52-59 (LAIHSDGQ) are Cytoplasmic-facing. A helical membrane pass occupies residues 60 to 80 (LHKPMYFFLSHLSFLEMWYVT). Topologically, residues 81–104 (VISPKMLVDFLSHDKSISFNGCMT) are extracellular. Cysteines 102 and 194 form a disulfide. A helical transmembrane segment spans residues 105–125 (QLYFFVTFVCTEYILLAIMAF). Residues 126–144 (DRYVAICNPLRYPVIMTNQ) lie on the Cytoplasmic side of the membrane. A helical membrane pass occupies residues 145–165 (LCGTLAGGCWFCGLMTAMIKM). Residues 166–202 (VFIAQLHYCGMPQINHYFCDISPLLNVSCEDASQAEM) lie on the Extracellular side of the membrane. N191 carries an N-linked (GlcNAc...) asparagine glycan. Residues 203–222 (VDFFLALMVIAIPLCVVVAS) form a helical membrane-spanning segment. The Cytoplasmic portion of the chain corresponds to 223 to 242 (YAAILATILRIPSAQGRQKA). Residues 243–263 (FSTCASHLTVVILFYSMTLFT) traverse the membrane as a helical segment. Residues 264 to 276 (YARPKLMYAYNSN) lie on the Extracellular side of the membrane. The chain crosses the membrane as a helical span at residues 277–297 (KVVSVLYTVIVPLLNPIIYCL). At 298 to 325 (RNHEVKAALRKTIHCRGSGPQGNGAFSS) the chain is on the cytoplasmic side.

Belongs to the G-protein coupled receptor 1 family.

The protein localises to the cell membrane. In terms of biological role, odorant receptor. This is Olfactory receptor 6Y1 (OR6Y1) from Homo sapiens (Human).